Here is a 258-residue protein sequence, read N- to C-terminus: MTLAVRVIPCLDVDAGRVVKGINFKELRDAGDPVELARTYDAEGADELTFLDISASFEGRATTMEIVSRTAEEVFIPLTVGGGVSSVADVDRLLRAGADKVAVNTAAINRPELVAEIADRFGNQVLVLSVDARRVDARRAPGTASGFEVTTHGGRKSAGLDAVEWAVRAADLGAGEILLNAMDADGTQDGFDLELIRAVRREVTVPVIASGGAGAVEHFPPAVEAGADAVLAATVFHFGTLRIADVKASLAGAGYPVR.

Catalysis depends on residues aspartate 12 and aspartate 131.

It belongs to the HisA/HisF family. In terms of assembly, heterodimer of HisH and HisF.

Its subcellular location is the cytoplasm. It catalyses the reaction 5-[(5-phospho-1-deoxy-D-ribulos-1-ylimino)methylamino]-1-(5-phospho-beta-D-ribosyl)imidazole-4-carboxamide + L-glutamine = D-erythro-1-(imidazol-4-yl)glycerol 3-phosphate + 5-amino-1-(5-phospho-beta-D-ribosyl)imidazole-4-carboxamide + L-glutamate + H(+). The protein operates within amino-acid biosynthesis; L-histidine biosynthesis; L-histidine from 5-phospho-alpha-D-ribose 1-diphosphate: step 5/9. IGPS catalyzes the conversion of PRFAR and glutamine to IGP, AICAR and glutamate. The HisF subunit catalyzes the cyclization activity that produces IGP and AICAR from PRFAR using the ammonia provided by the HisH subunit. In Nocardioides sp. (strain ATCC BAA-499 / JS614), this protein is Imidazole glycerol phosphate synthase subunit HisF.